The following is a 690-amino-acid chain: CREB-H transcription factor homolog let-607 (690 aa).

3 disordered regions span residues 87 to 118 (NDNC…SSGG), 166 to 192 (SAVH…SNGL), and 205 to 253 (PASI…KYPP). 3 stretches are compositionally biased toward low complexity: residues 100 to 116 (SLPI…YHSS), 170 to 181 (QNQQQQQRRLNQ), and 213 to 236 (PSSS…SSST). Residues 284-347 (DLKRIRRKIR…QSVISQLKKL (64 aa)) enclose the bZIP domain. The tract at residues 286 to 321 (KRIRRKIRNKRSAQTSRKRKQDYIEQLEDRVSESTK) is basic motif. Residues 295 to 350 (KRSAQTSRKRKQDYIEQLEDRVSESTKENQALKQQIERLSSENQSVISQLKKLQAQ) are a coiled coil. The leucine-zipper stretch occupies residues 326–333 (LKQQIERL). Residues 451 to 464 (HNNSKYPASGNQNH) are compositionally biased toward polar residues. Disordered regions lie at residues 451-495 (HNNS…SMYR) and 509-536 (GARK…ATSP). Low complexity-rich tracts occupy residues 480 to 492 (QPKQ…HQPS) and 514 to 535 (SSTS…SATS).

The protein belongs to the bZIP family.

It is found in the nucleus. Functionally, probable transcription factor, required during migration of the gonadal distal tip cells (DTC). Probably regulates cell adhesion of DTCs via modulation of expression of genes involved in integrin-mediated adhesion, including tln-1, src-1, and integrin pat-2. Modulates expression of genes involved in protein trafficking during embryogenesis, including emo-1, sec-61, calu-1, sec-24.1, enpl-1, sar-1 and tfg-1. This Caenorhabditis elegans protein is CREB-H transcription factor homolog let-607.